Here is a 97-residue protein sequence, read N- to C-terminus: MALLIVILSMFYLGLMGILLNRLHFLSILLCLELLLISLFIGIAIWNNNTGVPQNTTFNLFVLTLVACEASIGLSLMVGLSRTHSSNLVGSLSLLQY.

Helical transmembrane passes span Met-1–Asn-21, Phe-25–Ile-45, and Leu-60–Leu-80.

This sequence belongs to the complex I subunit 4L family.

The protein localises to the mitochondrion membrane. The catalysed reaction is a ubiquinone + NADH + 5 H(+)(in) = a ubiquinol + NAD(+) + 4 H(+)(out). In terms of biological role, core subunit of the mitochondrial membrane respiratory chain NADH dehydrogenase (Complex I) that is believed to belong to the minimal assembly required for catalysis. Complex I functions in the transfer of electrons from NADH to the respiratory chain. The immediate electron acceptor for the enzyme is believed to be ubiquinone. The chain is NADH-ubiquinone oxidoreductase chain 4L (ND4L) from Strongylocentrotus purpuratus (Purple sea urchin).